The primary structure comprises 394 residues: NAD(P)H-quinone oxidoreductase subunit H (394 aa).

Belongs to the complex I 49 kDa subunit family. NDH-1 can be composed of about 15 different subunits; different subcomplexes with different compositions have been identified which probably have different functions.

It is found in the cellular thylakoid membrane. The catalysed reaction is a plastoquinone + NADH + (n+1) H(+)(in) = a plastoquinol + NAD(+) + n H(+)(out). It catalyses the reaction a plastoquinone + NADPH + (n+1) H(+)(in) = a plastoquinol + NADP(+) + n H(+)(out). NDH-1 shuttles electrons from an unknown electron donor, via FMN and iron-sulfur (Fe-S) centers, to quinones in the respiratory and/or the photosynthetic chain. The immediate electron acceptor for the enzyme in this species is believed to be plastoquinone. Couples the redox reaction to proton translocation, and thus conserves the redox energy in a proton gradient. Cyanobacterial NDH-1 also plays a role in inorganic carbon-concentration. This is NAD(P)H-quinone oxidoreductase subunit H from Prochlorococcus marinus (strain MIT 9211).